Consider the following 372-residue polypeptide: Septin-1 (372 aa).

The region spanning 27–301 is the Septin-type G domain; it reads KGFDFTLMVA…EGYRARCLQS (275 aa). The segment at 37 to 44 is G1 motif; it reads GESGLGKS. GTP is bound by residues 37–44, Thr71, Gly97, and 176–184; these read GESGLGKS and KADALMPQE. The interval 94–97 is G3 motif; that stretch reads DTPG. The segment at 175–178 is G4 motif; that stretch reads GKAD. Ser211 carries the post-translational modification Phosphoserine. Gly234 and Arg250 together coordinate GTP. Ser253 is modified (phosphoserine; by AURKB). The residue at position 256 (Thr256) is a Phosphothreonine. Ser312 and Ser320 each carry phosphoserine; by AURKB. The disordered stretch occupies residues 352–372; sequence LEKMQAQMQQSQAQGEQSDAL. Positions 355–372 are enriched in low complexity; the sequence is MQAQMQQSQAQGEQSDAL.

It belongs to the TRAFAC class TrmE-Era-EngA-EngB-Septin-like GTPase superfamily. Septin GTPase family. Septins polymerize into heterooligomeric protein complexes that form filaments, and can associate with cellular membranes, actin filaments and microtubules. GTPase activity is required for filament formation. Interacts with AURKB. In terms of tissue distribution, expressed at high levels in lymphoid and hematopoietic tissues.

It localises to the cytoplasm. The protein localises to the cytoskeleton. The protein resides in the microtubule organizing center. It is found in the centrosome. Its subcellular location is the midbody. In terms of biological role, filament-forming cytoskeletal GTPase. May play a role in cytokinesis (Potential). In Homo sapiens (Human), this protein is Septin-1.